The primary structure comprises 243 residues: 1-(5-phosphoribosyl)-5-[(5-phosphoribosylamino)methylideneamino] imidazole-4-carboxamide isomerase (243 aa).

The Proton acceptor role is filled by aspartate 8. Residue aspartate 129 is the Proton donor of the active site.

This sequence belongs to the HisA/HisF family.

Its subcellular location is the cytoplasm. It catalyses the reaction 1-(5-phospho-beta-D-ribosyl)-5-[(5-phospho-beta-D-ribosylamino)methylideneamino]imidazole-4-carboxamide = 5-[(5-phospho-1-deoxy-D-ribulos-1-ylimino)methylamino]-1-(5-phospho-beta-D-ribosyl)imidazole-4-carboxamide. The protein operates within amino-acid biosynthesis; L-histidine biosynthesis; L-histidine from 5-phospho-alpha-D-ribose 1-diphosphate: step 4/9. This chain is 1-(5-phosphoribosyl)-5-[(5-phosphoribosylamino)methylideneamino] imidazole-4-carboxamide isomerase, found in Brucella suis biovar 1 (strain 1330).